Reading from the N-terminus, the 332-residue chain is Beta-ketoacyl-[acyl-carrier-protein] synthase III (332 aa).

Catalysis depends on residues Cys-116 and His-255. Residues Gln-256 to Arg-260 form an ACP-binding region. Residue Asn-285 is part of the active site.

Belongs to the thiolase-like superfamily. FabH family. As to quaternary structure, homodimer.

It localises to the cytoplasm. The catalysed reaction is malonyl-[ACP] + acetyl-CoA + H(+) = 3-oxobutanoyl-[ACP] + CO2 + CoA. Its pathway is lipid metabolism; fatty acid biosynthesis. Catalyzes the condensation reaction of fatty acid synthesis by the addition to an acyl acceptor of two carbons from malonyl-ACP. Catalyzes the first condensation reaction which initiates fatty acid synthesis and may therefore play a role in governing the total rate of fatty acid production. Possesses both acetoacetyl-ACP synthase and acetyl transacylase activities. Its substrate specificity determines the biosynthesis of branched-chain and/or straight-chain of fatty acids. In Helicobacter hepaticus (strain ATCC 51449 / 3B1), this protein is Beta-ketoacyl-[acyl-carrier-protein] synthase III.